The following is a 343-amino-acid chain: Holliday junction branch migration complex subunit RuvB (343 aa).

The segment at 1–182 is large ATPase domain (RuvB-L); that stretch reads MTDPIPLHTP…FGIPVRLNFY (182 aa). ATP-binding residues include Leu21, Arg22, Gly63, Lys66, Thr67, Thr68, Arg172, Tyr182, and Arg219. Thr67 is a Mg(2+) binding site. The segment at 183–253 is small ATPAse domain (RuvB-S); that stretch reads TEEELEKVVT…IADAALTRLE (71 aa). Positions 256–343 are head domain (RuvB-H); it reads GLGLDAMDRR…SQTGLFDGKS (88 aa). Residues Arg292, Arg311, and Arg316 each contribute to the DNA site.

It belongs to the RuvB family. In terms of assembly, homohexamer. Forms an RuvA(8)-RuvB(12)-Holliday junction (HJ) complex. HJ DNA is sandwiched between 2 RuvA tetramers; dsDNA enters through RuvA and exits via RuvB. An RuvB hexamer assembles on each DNA strand where it exits the tetramer. Each RuvB hexamer is contacted by two RuvA subunits (via domain III) on 2 adjacent RuvB subunits; this complex drives branch migration. In the full resolvosome a probable DNA-RuvA(4)-RuvB(12)-RuvC(2) complex forms which resolves the HJ.

It localises to the cytoplasm. It catalyses the reaction ATP + H2O = ADP + phosphate + H(+). Functionally, the RuvA-RuvB-RuvC complex processes Holliday junction (HJ) DNA during genetic recombination and DNA repair, while the RuvA-RuvB complex plays an important role in the rescue of blocked DNA replication forks via replication fork reversal (RFR). RuvA specifically binds to HJ cruciform DNA, conferring on it an open structure. The RuvB hexamer acts as an ATP-dependent pump, pulling dsDNA into and through the RuvAB complex. RuvB forms 2 homohexamers on either side of HJ DNA bound by 1 or 2 RuvA tetramers; 4 subunits per hexamer contact DNA at a time. Coordinated motions by a converter formed by DNA-disengaged RuvB subunits stimulates ATP hydrolysis and nucleotide exchange. Immobilization of the converter enables RuvB to convert the ATP-contained energy into a lever motion, pulling 2 nucleotides of DNA out of the RuvA tetramer per ATP hydrolyzed, thus driving DNA branch migration. The RuvB motors rotate together with the DNA substrate, which together with the progressing nucleotide cycle form the mechanistic basis for DNA recombination by continuous HJ branch migration. Branch migration allows RuvC to scan DNA until it finds its consensus sequence, where it cleaves and resolves cruciform DNA. In Erythrobacter litoralis (strain HTCC2594), this protein is Holliday junction branch migration complex subunit RuvB.